The primary structure comprises 131 residues: Small ribosomal subunit protein uS11 (131 aa).

This sequence belongs to the universal ribosomal protein uS11 family. In terms of assembly, part of the 30S ribosomal subunit. Interacts with proteins S7 and S18. Binds to IF-3.

In terms of biological role, located on the platform of the 30S subunit, it bridges several disparate RNA helices of the 16S rRNA. Forms part of the Shine-Dalgarno cleft in the 70S ribosome. This chain is Small ribosomal subunit protein uS11, found in Helicobacter acinonychis (strain Sheeba).